The sequence spans 613 residues: Dihydroxy-acid dehydratase (613 aa).

Position 81 (aspartate 81) interacts with Mg(2+). A [2Fe-2S] cluster-binding site is contributed by cysteine 122. Mg(2+)-binding residues include aspartate 123 and lysine 124. Residue lysine 124 is modified to N6-carboxylysine. Cysteine 193 lines the [2Fe-2S] cluster pocket. A Mg(2+)-binding site is contributed by glutamate 489. Serine 515 serves as the catalytic Proton acceptor.

The protein belongs to the IlvD/Edd family. Homodimer. [2Fe-2S] cluster is required as a cofactor. Requires Mg(2+) as cofactor.

It catalyses the reaction (2R)-2,3-dihydroxy-3-methylbutanoate = 3-methyl-2-oxobutanoate + H2O. The enzyme catalyses (2R,3R)-2,3-dihydroxy-3-methylpentanoate = (S)-3-methyl-2-oxopentanoate + H2O. It participates in amino-acid biosynthesis; L-isoleucine biosynthesis; L-isoleucine from 2-oxobutanoate: step 3/4. It functions in the pathway amino-acid biosynthesis; L-valine biosynthesis; L-valine from pyruvate: step 3/4. Its function is as follows. Functions in the biosynthesis of branched-chain amino acids. Catalyzes the dehydration of (2R,3R)-2,3-dihydroxy-3-methylpentanoate (2,3-dihydroxy-3-methylvalerate) into 2-oxo-3-methylpentanoate (2-oxo-3-methylvalerate) and of (2R)-2,3-dihydroxy-3-methylbutanoate (2,3-dihydroxyisovalerate) into 2-oxo-3-methylbutanoate (2-oxoisovalerate), the penultimate precursor to L-isoleucine and L-valine, respectively. This Pseudomonas fluorescens (strain Pf0-1) protein is Dihydroxy-acid dehydratase.